A 1032-amino-acid chain; its full sequence is Phosphoenolpyruvate carboxylase 4 (1032 aa).

Histidine 154 is a catalytic residue. The disordered stretch occupies residues 377-407 (PNLQKQNEQDFSESDWEKIDNGSRSGLTSRG). Positions 398 to 407 (GSRSGLTSRG) are enriched in polar residues. Residue lysine 699 is part of the active site.

This sequence belongs to the PEPCase type 1 family. Homotetramer. Mg(2+) serves as cofactor. Expressed at low levels in flowers and siliques, and detectable in roots.

It localises to the cytoplasm. The catalysed reaction is oxaloacetate + phosphate = phosphoenolpyruvate + hydrogencarbonate. In terms of biological role, through the carboxylation of phosphoenolpyruvate (PEP) it forms oxaloacetate, a four-carbon dicarboxylic acid source for the tricarboxylic acid cycle. This chain is Phosphoenolpyruvate carboxylase 4 (PPC4), found in Arabidopsis thaliana (Mouse-ear cress).